The following is an 879-amino-acid chain: Alanine--tRNA ligase (879 aa).

Zn(2+) contacts are provided by histidine 567, histidine 571, cysteine 669, and histidine 673.

It belongs to the class-II aminoacyl-tRNA synthetase family. Zn(2+) is required as a cofactor.

The protein localises to the cytoplasm. It carries out the reaction tRNA(Ala) + L-alanine + ATP = L-alanyl-tRNA(Ala) + AMP + diphosphate. In terms of biological role, catalyzes the attachment of alanine to tRNA(Ala) in a two-step reaction: alanine is first activated by ATP to form Ala-AMP and then transferred to the acceptor end of tRNA(Ala). Also edits incorrectly charged Ser-tRNA(Ala) and Gly-tRNA(Ala) via its editing domain. The protein is Alanine--tRNA ligase of Lactobacillus helveticus (strain DPC 4571).